Reading from the N-terminus, the 294-residue chain is uncharacterized protein (294 aa).

The helical transmembrane segment at 5–25 (ILIILIIIIIVIISLIYLKNF) threads the bilayer. N-linked (GlcNAc...) asparagine; by host glycans are attached at residues Asn-151, Asn-170, Asn-205, and Asn-271.

The protein localises to the membrane. This is an uncharacterized protein from Acanthamoeba polyphaga (Amoeba).